We begin with the raw amino-acid sequence, 565 residues long: NAD-dependent malic enzyme (565 aa).

The Proton donor role is filled by Tyr104. Position 157 (Arg157) interacts with NAD(+). The Proton acceptor role is filled by Lys175. A divalent metal cation is bound by residues Glu246, Asp247, and Asp270. The NAD(+) site is built by Asp270 and Asn418.

This sequence belongs to the malic enzymes family. As to quaternary structure, homotetramer. Requires Mg(2+) as cofactor. It depends on Mn(2+) as a cofactor.

The catalysed reaction is (S)-malate + NAD(+) = pyruvate + CO2 + NADH. It catalyses the reaction oxaloacetate + H(+) = pyruvate + CO2. This Edwardsiella ictaluri (strain 93-146) protein is NAD-dependent malic enzyme.